Consider the following 55-residue polypeptide: Neurotoxin BmKX-A1-S31 (55 aa).

An N-terminal signal peptide occupies residues 1 to 23; it reads MKIFFAVLVILVLFSMLIWTAYG. 3 disulfides stabilise this stretch: Cys30/Cys45, Cys36/Cys50, and Cys39/Cys53.

As to expression, expressed by the venom gland.

Its subcellular location is the secreted. The protein is Neurotoxin BmKX-A1-S31 of Olivierus martensii (Manchurian scorpion).